Consider the following 429-residue polypeptide: Prenyltransferase okaC (429 aa).

Residues Arg-101, Lys-189, Tyr-191, Lys-257, Tyr-259, Tyr-342, Tyr-406, and Tyr-410 each contribute to the dimethylallyl diphosphate site.

This sequence belongs to the tryptophan dimethylallyltransferase family.

It carries out the reaction cyclo(L-Trp-L-Trp) + 2 dimethylallyl diphosphate = cyclo(N(8)-(alpha,alpha-dimethylallyl)-L-Trp-6a-(alpha,alpha-dimethylallyl)-L-Trp) + 2 diphosphate. It functions in the pathway alkaloid biosynthesis. Prenyltransferase; part of the gene cluster that mediates the biosynthesis of okaramine B, a prenylated indole alkaloid that possesses an unusual octacyclic ring system, including a four-membered azetidine ring and an eight-membered azocine ring, and that exhibits insecticidal activity against silkworm larvae. Within the pathway, okaC performs asymmetric reverse prenylation of cyclo(L-Trp-L-Trp) at N-1 and C-2' of the indole ring to produce the cyclic prenylated tryptophan dimer cyclo(N8-(alpha,alpha-dimethylallyl)-L-Trp-6a-(alpha,alpha-dime-thylallyl)-L-Trp). The biosynthesis begins with the NRPS okaA that condenses two tryptophan molecules into cyclo(L-Trp-L-Trp). Prenylation by the prenyltransferase okaC then leads to the formation of cyclo(N8-(alpha,alpha-dimethylallyl)-L-Trp-6a-(alpha,alpha-dime-thylallyl)-L-Trp). This is followed by indole 2,3-epoxidation by the FAD-dependent monooxygenase okaB to facilitate the formation of the hexahydropyrrolo[2,3-b]indole (HPI) moiety of okaramine C. The cytochrome P450 monooxygenase okaD then likely catalyzes formation of the eight-membered ring of okaramine A. The dioxygenase okaE further forms the unusual 2-dimethyl-3-methyl-azetidine ring to yield 12-deshydroxyl okaramine E, as well as the hydroxylation of 12-deshydroxyl okaramine E to produce okaramine E. The cytochrome P450 monoxygenase okaG converts 12-deshydroxyl okaramine E into 3-desmethyl okaramine B which is further methylated by the methyltransferase okaF into okaramine B. In a shunt pathway, okaG and okaF together are also able to convert okaramine E into okaramine D. Okaramine H is produced by nonenzymatic conversion from okaramine A. The chain is Prenyltransferase okaC from Penicillium ochrochloron.